Consider the following 556-residue polypeptide: Peptide chain release factor 3 (556 aa).

One can recognise a tr-type G domain in the interval 28–297; sequence QQRRNFAIIS…AFLDYALKPG (270 aa). Residues 37–44, 105–109, and 159–162 each bind GTP; these read SHPDAGKT, DTPGH, and NKMD.

It belongs to the TRAFAC class translation factor GTPase superfamily. Classic translation factor GTPase family. PrfC subfamily.

The protein localises to the cytoplasm. In terms of biological role, increases the formation of ribosomal termination complexes and stimulates activities of RF-1 and RF-2. It binds guanine nucleotides and has strong preference for UGA stop codons. It may interact directly with the ribosome. The stimulation of RF-1 and RF-2 is significantly reduced by GTP and GDP, but not by GMP. This Synechococcus elongatus (strain ATCC 33912 / PCC 7942 / FACHB-805) (Anacystis nidulans R2) protein is Peptide chain release factor 3.